A 218-amino-acid polypeptide reads, in one-letter code: Adenylate kinase (218 aa).

14–19 (GAGKGT) provides a ligand contact to ATP. Residues 34–63 (STGDMFRAAIKAGTELGKQAKALMDEGKLV) are NMP. AMP-binding positions include T35, R40, 61–63 (KLV), 89–92 (GFPR), and Q96. Positions 126–163 (GRRVHQASGRSYHIVYNPPKVEGKDDVTGEDLIIRADD) are LID. ATP-binding positions include R127 and 136-137 (SY). Positions 160 and 171 each coordinate AMP. K204 lines the ATP pocket.

It belongs to the adenylate kinase family. In terms of assembly, monomer.

It localises to the cytoplasm. It carries out the reaction AMP + ATP = 2 ADP. The protein operates within purine metabolism; AMP biosynthesis via salvage pathway; AMP from ADP: step 1/1. Catalyzes the reversible transfer of the terminal phosphate group between ATP and AMP. Plays an important role in cellular energy homeostasis and in adenine nucleotide metabolism. In Mannheimia succiniciproducens (strain KCTC 0769BP / MBEL55E), this protein is Adenylate kinase.